Consider the following 67-residue polypeptide: Large ribosomal subunit protein bL32 (67 aa).

The span at 1 to 19 (MAVPKRKMSRANTRMRRSQ) shows a compositional bias: basic residues. The tract at residues 1–22 (MAVPKRKMSRANTRMRRSQWKA) is disordered.

The protein belongs to the bacterial ribosomal protein bL32 family.

This is Large ribosomal subunit protein bL32 from Kocuria rhizophila (strain ATCC 9341 / DSM 348 / NBRC 103217 / DC2201).